The primary structure comprises 359 residues: Type-1 angiotensin II receptor B (359 aa).

Over 1-25 the chain is Extracellular; that stretch reads MILNSSIEDGIKRIQDDCPKAGRHN. N-linked (GlcNAc...) asparagine glycosylation occurs at asparagine 4. Angiotensin II contacts are provided by glutamine 15 and aspartate 17. 2 cysteine pairs are disulfide-bonded: cysteine 18–cysteine 274 and cysteine 101–cysteine 180. The helical transmembrane segment at 26–55 threads the bilayer; that stretch reads YIFVMIPTLYSIIFVVGIFGNSLVVIVIYF. The Cytoplasmic portion of the chain corresponds to 56–61; the sequence is YMKLKT. A helical membrane pass occupies residues 62-89; it reads VASVFLLNLALADLCFLLTLPLWAVYTA. Over 90–98 the chain is Extracellular; sequence MEYQWPFGN. A helical transmembrane segment spans residues 99–125; sequence HLCKIASASVSFNLYASVFLLTCLSID. Topologically, residues 126-141 are cytoplasmic; sequence RYLAIVHPMKSRLRRT. Residues 142-165 traverse the membrane as a helical segment; it reads MLVAKVTCIIIWLMAGLASLPAVI. Over 166–190 the chain is Extracellular; the sequence is HRNVYFIENTNITVCAFHYESQNST. Arginine 167 is a binding site for angiotensin II. N-linked (GlcNAc...) asparagine glycosylation occurs at asparagine 176. Residues phenylalanine 182, histidine 183, and tyrosine 184 each contribute to the angiotensin II site. A glycan (N-linked (GlcNAc...) asparagine) is linked at asparagine 188. Residues 191-216 traverse the membrane as a helical segment; sequence LPIGLGLTKNILGFVFPFVIILTSYT. Residue lysine 199 participates in angiotensin II binding. Over 217-239 the chain is Cytoplasmic; sequence LIWKALKKAYKIQKNTPRNDDIF. The chain crosses the membrane as a helical span at residues 240-268; the sequence is RIIMAIVLFFFFSWVPHQIFSFLDVLIQL. The Extracellular portion of the chain corresponds to 269–278; it reads GVIHDCEIAD. A helical transmembrane segment spans residues 279–304; sequence VVDTAMPITICIAYFNNCLNPLFYGF. The Cytoplasmic portion of the chain corresponds to 305 to 359; it reads LGKKFKRYFLQLLKYIPPKARSHAGLSTKMSTLSYRPSDNMSSSARKSAYCFEVE. Cysteine 355 carries S-palmitoyl cysteine lipidation.

This sequence belongs to the G-protein coupled receptor 1 family. Interacts with MAS1. Interacts with ARRB1. Interacts with FLNA (via filamin repeat 21); increases PKA-mediated phosphorylation of FLNA. In terms of processing, C-terminal Ser or Thr residues may be phosphorylated.

It localises to the cell membrane. In terms of biological role, receptor for angiotensin II, a vasoconstricting peptide, which acts as a key regulator of blood pressure and sodium retention by the kidney. The activated receptor in turn couples to G-alpha proteins G(q) (GNAQ, GNA11, GNA14 or GNA15) and thus activates phospholipase C and increases the cytosolic Ca(2+) concentrations, which in turn triggers cellular responses such as stimulation of protein kinase C. The chain is Type-1 angiotensin II receptor B (Agtr1b) from Mus musculus (Mouse).